Consider the following 1395-residue polypeptide: DNA polymerase II large subunit (1395 aa).

Disordered regions lie at residues 279-320 (IGKD…PRVE) and 657-704 (GNRM…MSDT). Over residues 283-312 (EADEGDSAEDANGDDAGEGADDDGGDEADE) the composition is skewed to acidic residues. 2 stretches are compositionally biased toward basic and acidic residues: residues 661–671 (GRPEKSERRDL) and 690–700 (DVAKATKHADD).

This sequence belongs to the archaeal DNA polymerase II family. Heterodimer of a large subunit and a small subunit. In terms of processing, this protein undergoes a protein self splicing that involves a post-translational excision of the intervening region (intein) followed by peptide ligation.

It catalyses the reaction DNA(n) + a 2'-deoxyribonucleoside 5'-triphosphate = DNA(n+1) + diphosphate. It carries out the reaction Exonucleolytic cleavage in the 3'- to 5'-direction to yield nucleoside 5'-phosphates.. In terms of biological role, possesses two activities: a DNA synthesis (polymerase) and an exonucleolytic activity that degrades single-stranded DNA in the 3'- to 5'-direction. Has a template-primer preference which is characteristic of a replicative DNA polymerase. The protein is DNA polymerase II large subunit of Haloarcula marismortui (strain ATCC 43049 / DSM 3752 / JCM 8966 / VKM B-1809) (Halobacterium marismortui).